The sequence spans 345 residues: Protein-glutamate methylesterase/protein-glutamine glutaminase (345 aa).

One can recognise a Response regulatory domain in the interval 5 to 123 (KVIVVDDSVL…ELSKMKDDLI (119 aa)). The residue at position 56 (D56) is a 4-aspartylphosphate. The region spanning 153-343 (SSDSIEAVVI…DEIIKIVRGL (191 aa)) is the CheB-type methylesterase domain. Catalysis depends on residues S165, H192, and D285.

It belongs to the CheB family. In terms of processing, phosphorylated by CheA. Phosphorylation of the N-terminal regulatory domain activates the methylesterase activity.

It is found in the cytoplasm. The catalysed reaction is [protein]-L-glutamate 5-O-methyl ester + H2O = L-glutamyl-[protein] + methanol + H(+). It carries out the reaction L-glutaminyl-[protein] + H2O = L-glutamyl-[protein] + NH4(+). Involved in chemotaxis. Part of a chemotaxis signal transduction system that modulates chemotaxis in response to various stimuli. Catalyzes the demethylation of specific methylglutamate residues introduced into the chemoreceptors (methyl-accepting chemotaxis proteins or MCP) by CheR. Also mediates the irreversible deamidation of specific glutamine residues to glutamic acid. The protein is Protein-glutamate methylesterase/protein-glutamine glutaminase of Clostridium acetobutylicum (strain ATCC 824 / DSM 792 / JCM 1419 / IAM 19013 / LMG 5710 / NBRC 13948 / NRRL B-527 / VKM B-1787 / 2291 / W).